A 200-amino-acid chain; its full sequence is Alpha/beta-tubulin-N-acetyltransferase 9 (200 aa).

An N-acetyltransferase domain is found at 34–181 (ETLRELTASE…HEVTLERPIT (148 aa)).

This sequence belongs to the acetyltransferase family. GNAT subfamily. Interacts with microtubules as well as alpha/beta-tubulin heterodimers.

The protein resides in the nucleus. It localises to the cytoplasm. The protein localises to the cytoskeleton. Its subcellular location is the spindle. It is found in the spindle pole. It carries out the reaction N-terminal L-methionyl-[tubulin] + acetyl-CoA = N-terminal N(alpha)-acetyl-L-methionyl-[tubulin] + CoA + H(+). Functionally, N-acetyltransferase that mediates the acetylation of the N-terminal residues of alpha- and beta-tubulin. Required for microtubule stability and inhibition of JNK signaling to promote cell survival during development, possibly acting independently of its N-acetyltransferase activity. Necessary for the stabilization of spindle microtubules and for mitosis progression. Regulates microtubule stability by inhibiting Spastin-mediated depolymerization and promoting Eb1-mediated polymerization. The sequence is that of Alpha/beta-tubulin-N-acetyltransferase 9 from Drosophila melanogaster (Fruit fly).